Reading from the N-terminus, the 304-residue chain is E3 ubiquitin-protein ligase RNF115 (304 aa).

Ala-2 carries the post-translational modification N-acetylalanine. The interval Pro-95–Ser-138 is disordered. Positions Gln-98–His-110 are enriched in basic and acidic residues. Residues Ser-132 and Ser-133 each carry the phosphoserine; by PKB/AKT1 modification. The RING-type zinc finger occupies Cys-228–Arg-269. The tract at residues Leu-272–Phe-304 is disordered. Positions Arg-279 to Ser-296 are enriched in polar residues.

As to quaternary structure, interacts with RAB7A. Interacts with EGFR and FLT3. Interacts with BST2. Interacts with STX17. Interacts with YWHAE. In terms of processing, phosphorylated by AKT1, allowing association with the 14-3-3 chaperones that facilitates associating with TLRs. Post-translationally, RING-type zinc finger-dependent and E2-dependent autoubiquitination. Deubiquitinated by USP9X; antogonizing its autoubiquitination and subsequent proteasomal degradation. Expressed at extremely low levels in normal breast, prostate, lung, colon. Higher levels of expression are detected in heart, skeletal muscle, testis as well as in breast and prostate cancer cells.

It localises to the cytoplasm. It is found in the nucleus. Its subcellular location is the endoplasmic reticulum. The protein resides in the golgi apparatus. It catalyses the reaction S-ubiquitinyl-[E2 ubiquitin-conjugating enzyme]-L-cysteine + [acceptor protein]-L-lysine = [E2 ubiquitin-conjugating enzyme]-L-cysteine + N(6)-ubiquitinyl-[acceptor protein]-L-lysine.. Its pathway is protein modification; protein ubiquitination. Its function is as follows. E3 ubiquitin-protein ligase that catalyzes the 'Lys-48'- and/or 'Lys-63'-linked polyubiquitination of various substrates and thereby plays a role in a number of signaling pathways including autophagy, innate immunity, cell proliferation and cell death. Plays a role in the endosomal trafficking and degradation of membrane receptors including EGFR, FLT3, MET and CXCR4 through their polyubiquitination. Participates together with BST2 in antiviral immunity by facilitating the internalization of HIV-1 virions into intracellular vesicles leading to their lysosomal degradation. Also possesses an antiviral activity independently of BST2 by promoting retroviral GAG proteins ubiquitination, redistribution to endo-lysosomal compartments and, ultimately, lysosomal degradation. Catalyzes distinct types of ubiquitination on MAVS and STING1 at different phases of viral infection to promote innate antiviral response. Mediates the 'Lys-48'-linked ubiquitination of MAVS leading to its proteasomal degradation and ubiquitinates STING1 via 'Lys-63'-linked polyubiquitination, critical for its oligomerization and the subsequent recruitment of TBK1. Plays a positive role in the autophagosome-lysosome fusion by interacting with STX17 and enhancing its stability without affecting 'Lys-48'- or 'Lys-63'-linked polyubiquitination levels, which in turn promotes autophagosome maturation. Negatively regulates TLR-induced expression of proinflammatory cytokines by catalyzing 'Lys-11'-linked ubiquitination of RAB1A and RAB13 to inhibit post-ER trafficking of TLRs to the Golgi by RAB1A and subsequently from the Golgi apparatus to the cell surface by RAB13. The sequence is that of E3 ubiquitin-protein ligase RNF115 from Homo sapiens (Human).